We begin with the raw amino-acid sequence, 267 residues long: Phosphonoacetaldehyde hydrolase (267 aa).

Catalysis depends on aspartate 10, which acts as the Nucleophile. Mg(2+) contacts are provided by aspartate 10 and alanine 12. The active-site Schiff-base intermediate with substrate is the lysine 51. Mg(2+) is bound at residue aspartate 184.

It belongs to the HAD-like hydrolase superfamily. PhnX family. As to quaternary structure, homodimer. The cofactor is Mg(2+).

The catalysed reaction is phosphonoacetaldehyde + H2O = acetaldehyde + phosphate + H(+). In terms of biological role, involved in phosphonate degradation. This chain is Phosphonoacetaldehyde hydrolase, found in Paraburkholderia phytofirmans (strain DSM 17436 / LMG 22146 / PsJN) (Burkholderia phytofirmans).